An 833-amino-acid polypeptide reads, in one-letter code: F1 capsule-anchoring protein (833 aa).

A signal peptide spans 1–25; that stretch reads MRYSKLFLCAGLTLATLPCWGRAYT. Residues Cys-807 and Cys-829 are joined by a disulfide bond.

Belongs to the fimbrial export usher family.

It localises to the cell outer membrane. In terms of biological role, a probable role in capsular biogenesis. It is likely that the caf1A molecule binds F1 antigen subunits during the extracellular secretion process. This chain is F1 capsule-anchoring protein (caf1A), found in Yersinia pestis.